The following is a 138-amino-acid chain: Gamma-glutamylaminecyclotransferase (138 aa).

E63 acts as the Proton acceptor in catalysis.

Belongs to the gamma-glutamylcyclotransferase family.

It carries out the reaction epsilon-(gamma-L-glutamyl)-L-lysine = 5-oxo-L-proline + L-lysine. In terms of biological role, may contribute to degradation of proteins cross-linked by transglutaminases by degrading the cross-link between a lysine and a glutamic acid residue. Catalyzes the formation of 5-oxo-L-proline from L-gamma-glutamyl-L-epsilon-lysine. The protein is Gamma-glutamylaminecyclotransferase (ggact) of Xenopus laevis (African clawed frog).